The chain runs to 162 residues: Ribosomal RNA large subunit methyltransferase H (162 aa).

Position 108 (G108) interacts with S-adenosyl-L-methionine.

This sequence belongs to the RNA methyltransferase RlmH family. Homodimer.

It localises to the cytoplasm. The catalysed reaction is pseudouridine(1915) in 23S rRNA + S-adenosyl-L-methionine = N(3)-methylpseudouridine(1915) in 23S rRNA + S-adenosyl-L-homocysteine + H(+). Functionally, specifically methylates the pseudouridine at position 1915 (m3Psi1915) in 23S rRNA. The protein is Ribosomal RNA large subunit methyltransferase H of Methylobacterium sp. (strain 4-46).